The following is a 489-amino-acid chain: Glycogen synthase (489 aa).

K15 serves as a coordination point for ADP-alpha-D-glucose.

The protein belongs to the glycosyltransferase 1 family. Bacterial/plant glycogen synthase subfamily.

The catalysed reaction is [(1-&gt;4)-alpha-D-glucosyl](n) + ADP-alpha-D-glucose = [(1-&gt;4)-alpha-D-glucosyl](n+1) + ADP + H(+). Its pathway is glycan biosynthesis; glycogen biosynthesis. Functionally, synthesizes alpha-1,4-glucan chains using ADP-glucose. The polypeptide is Glycogen synthase (Francisella tularensis subsp. novicida (strain U112)).